The chain runs to 169 residues: Chorion protein E1 (169 aa).

The N-terminal stretch at 1–19 (MAWFTTVLIVASLLGSLVA) is a signal peptide. Tetradecapeptide repeat units lie at residues 114–127 (GAGR…KPRS) and 128–141 (GAGK…KPKS). Positions 119–169 (AEMEGKPRSGAGKGAEMEGKPKSTESVAETNTVAAGTGVVAEKTGTESSAS) are disordered. Residues 142–152 (TESVAETNTVA) are compositionally biased toward polar residues.

In terms of biological role, this protein is one of two components of the prominent 'filler' that helps mold the shape of aeropyle crowns. The protein is Chorion protein E1 of Antheraea polyphemus (Polyphemus moth).